The primary structure comprises 526 residues: Na(+)/H(+) antiporter NhaB (526 aa).

A run of 11 helical transmembrane segments spans residues 25–45 (IIAF…IAGW), 52–72 (IFTL…LLLI), 89–109 (IVVN…IYFM), 139–159 (AFLS…AVGM), 204–224 (LMMH…VGEP), 240–260 (FFVR…ATTF), 305–325 (GFIG…VGLI), 355–375 (FTAL…QGLF), 391–411 (LVMF…VFVG), 448–468 (VATP…IAPL), and 479–499 (MALP…YFGL).

It belongs to the NhaB Na(+)/H(+) (TC 2.A.34) antiporter family.

The protein localises to the cell inner membrane. It carries out the reaction 2 Na(+)(in) + 3 H(+)(out) = 2 Na(+)(out) + 3 H(+)(in). In terms of biological role, na(+)/H(+) antiporter that extrudes sodium in exchange for external protons. The sequence is that of Na(+)/H(+) antiporter NhaB from Pseudoalteromonas atlantica (strain T6c / ATCC BAA-1087).